We begin with the raw amino-acid sequence, 271 residues long: Phosphate import ATP-binding protein PstB (271 aa).

Positions 13 to 266 constitute an ABC transporter domain; it reads VRTAPVSEAE…PKHPYTEAYI (254 aa). Residue 57–64 coordinates ATP; that stretch reads GPSGCGKS.

It belongs to the ABC transporter superfamily. Phosphate importer (TC 3.A.1.7) family. As to quaternary structure, the complex is composed of two ATP-binding proteins (PstB), two transmembrane proteins (PstC and PstA) and a solute-binding protein (PstS).

The protein localises to the cell inner membrane. It catalyses the reaction phosphate(out) + ATP + H2O = ADP + 2 phosphate(in) + H(+). Part of the ABC transporter complex PstSACB involved in phosphate import. Responsible for energy coupling to the transport system. In Thermus thermophilus (strain ATCC 27634 / DSM 579 / HB8), this protein is Phosphate import ATP-binding protein PstB.